An 856-amino-acid polypeptide reads, in one-letter code: Alanine/arginine aminopeptidase (856 aa).

Substrate-binding positions include Glu-132 and 264 to 268; that span reads GAMEN. His-300 provides a ligand contact to Zn(2+). The active-site Proton acceptor is Glu-301. Zn(2+) contacts are provided by His-304 and Glu-323.

Belongs to the peptidase M1 family. It depends on Zn(2+) as a cofactor.

Its function is as follows. Positive effector of glycogen accumulation. May be involved in nutrient-sensing. The protein is Alanine/arginine aminopeptidase (AAP1) of Saccharomyces cerevisiae (strain ATCC 204508 / S288c) (Baker's yeast).